The chain runs to 299 residues: Biotin transporter (299 aa).

10 helical membrane-spanning segments follow: residues 2–22 (ALLI…GEYL), 26–46 (VDSY…FLPF), 56–76 (TVGL…MLSF), 81–101 (YLTV…ITLI), 110–130 (LRWG…IIRY), 137–157 (FWTG…GMVG), 172–192 (AFAW…FLLG), 202–222 (LQWG…YFMW), 233–253 (TLGI…LAIW), and 256–276 (QPHW…LWVH). EamA domains follow at residues 3–128 (LLII…AGII) and 139–274 (TGLL…ASLW).

This sequence belongs to the drug/metabolite transporter (DMT) superfamily. 10 TMS drug/metabolite exporter (DME) (TC 2.A.7.3) family.

It is found in the cell inner membrane. It catalyses the reaction biotin(in) = biotin(out). Functionally, uptake of biotin. In Escherichia coli O157:H7, this protein is Biotin transporter.